A 469-amino-acid chain; its full sequence is Endoplasmic reticulum oxidoreductin-1 (469 aa).

The signal sequence occupies residues 1–36 (MGKGAIKEEESEKKRKTWRWPLATLVVVFLAVAVSS). Intrachain disulfides connect C52–C71, C54–C69, C108–C372, C117–C122, C222–C231, and C375–C378. FAD is bound by residues R201, T203, and W214. FAD is bound by residues S242, H245, R275, and R282. A glycan (N-linked (GlcNAc...) asparagine) is linked at N365.

The protein belongs to the EROs family. As to quaternary structure, may function both as a monomer and a homodimer. FAD is required as a cofactor. In terms of processing, N-glycosylated.

The protein localises to the endoplasmic reticulum membrane. In terms of biological role, essential oxidoreductase that oxidizes proteins in the endoplasmic reticulum to produce disulfide bonds. Acts by oxidizing directly PDI isomerase through a direct disulfide exchange. Does not act as a direct oxidant of folding substrate, but relies on PDI to transfer oxidizing equivalent. Does not oxidize all PDI related proteins, suggesting that it can discriminate between PDI and related proteins. Its reoxidation probably involves electron transfer to molecular oxygen via FAD. Acts independently of glutathione. May be responsible for a significant proportion of reactive oxygen species (ROS) in the cell, thereby being a source of oxidative stress. The sequence is that of Endoplasmic reticulum oxidoreductin-1 (AERO1) from Arabidopsis thaliana (Mouse-ear cress).